The sequence spans 321 residues: Arabinan endo-1,5-alpha-L-arabinosidase A (321 aa).

An N-terminal signal peptide occupies residues 1–19 (MYQLLSVASVPLLASLVHG). Catalysis depends on aspartate 34, which acts as the Proton acceptor. The Proton donor role is filled by glutamate 200. An N-linked (GlcNAc...) asparagine glycan is attached at asparagine 295.

The protein belongs to the glycosyl hydrolase 43 family.

It catalyses the reaction Endohydrolysis of (1-&gt;5)-alpha-arabinofuranosidic linkages in (1-&gt;5)-arabinans.. The protein operates within glycan metabolism; L-arabinan degradation. In terms of biological role, its preferred substrate is linear 1,5-alpha-L-arabinan. The enzyme activity is progressively reduced as 1,5-alpha-chains become shorter or more highly substituted. This chain is Arabinan endo-1,5-alpha-L-arabinosidase A (abnA), found in Aspergillus niger.